The sequence spans 340 residues: Phenylalanine--tRNA ligase alpha subunit (340 aa).

Residue Glu-255 coordinates Mg(2+).

The protein belongs to the class-II aminoacyl-tRNA synthetase family. Phe-tRNA synthetase alpha subunit type 1 subfamily. As to quaternary structure, tetramer of two alpha and two beta subunits. The cofactor is Mg(2+).

Its subcellular location is the cytoplasm. The catalysed reaction is tRNA(Phe) + L-phenylalanine + ATP = L-phenylalanyl-tRNA(Phe) + AMP + diphosphate + H(+). The polypeptide is Phenylalanine--tRNA ligase alpha subunit (Exiguobacterium sp. (strain ATCC BAA-1283 / AT1b)).